Reading from the N-terminus, the 638-residue chain is uncharacterized protein (638 aa).

The CID domain occupies Met-1–Lys-138. Disordered stretches follow at residues Gln-318–Ser-338 and Leu-615–Lys-638.

This is an uncharacterized protein from Schizosaccharomyces pombe (strain 972 / ATCC 24843) (Fission yeast).